The chain runs to 701 residues: Aryl hydrocarbon receptor repressor (701 aa).

The bHLH domain maps to 25–78 (TMGAEKSNPSKRHRDRLNTELDHLASLLPFSPDIISKLDKLSVLRLSVSYLRVK). The 71-residue stretch at 106–176 (PVQEGRLLLE…RQLHWAMDPP (71 aa)) folds into the PAS domain. Over residues 409–430 (TEQRSQESTTKLTRQPSKNEPS) the composition is skewed to polar residues. A disordered region spans residues 409 to 432 (TEQRSQESTTKLTRQPSKNEPSTC). Residues 555-701 (ASTTSCLWLG…SKGSDGIFLP (147 aa)) form a needed for transcriptional repression region. Residues Lys583 and Lys660 each participate in a glycyl lysine isopeptide (Lys-Gly) (interchain with G-Cter in SUMO2) cross-link.

In terms of assembly, interacts with ARNT, ANKRA2, HDAC4 and HDAC5. Interacts with ARNT; forms a heterodimer with ARNT.

It is found in the cytoplasm. The protein resides in the nucleus. Functionally, mediates dioxin toxicity and is involved in regulation of cell growth and differentiation. Represses the transcription activity of AHR by competing with this transcription factor for heterodimer formation with the ARNT and subsequently binding to the xenobiotic response element (XRE) sequence present in the promoter regulatory region of variety of genes. Represses CYP1A1 by binding the XRE sequence and recruiting ANKRA2, HDAC4 and/or HDAC5. Autoregulates its expression by associating with its own XRE site. This is Aryl hydrocarbon receptor repressor (Ahrr) from Mus musculus (Mouse).